Consider the following 778-residue polypeptide: NAD-dependent deacetylase sir2B (778 aa).

ANK repeat units follow at residues 83–112 (LNWTPLHVAVSNKSIEVVTLLLERNIEISI), 114–142 (RYTAFHIAACNGDLNIIEKMITMNRVPNG), 148–178 (DMETSLFLSITNNHFEISEKIMDYYQSSMNS), 191–221 (HGVSPLIMSVLRKNLKMIKKLIEEGDADINS), 225–255 (DNSTSLHCAAIIDFTEAIEYLLDIGGIELMN), 260–289 (YGNSPIHEAAIKGNFKSIQTFINQLKKIII), 317–354 (DGSTPLHLCCNCVNSDNIENNLKSCKVLIEEGGVQVNG), 358–390 (GNATALHILACVGEDKSLPLVKYFLSIGSDPTI), and 394–423 (YGWTPIHQAYNNKNIQIYQLLLDHLKLTNS). The segment at 438–458 (SSTSTSSSSSSSSSSSSSSSS) is disordered. One can recognise a Deacetylase sirtuin-type domain in the interval 465–778 (KEELKLKGIE…DYFNTLFNSF (314 aa)). The active-site Proton acceptor is H608. Zn(2+) contacts are provided by C616, C619, C642, and C647. A disordered region spans residues 727–746 (KLKQQQENESGESSNDNDNN). Positions 733–746 (ENESGESSNDNDNN) are enriched in low complexity.

This sequence belongs to the sirtuin family. Requires Zn(2+) as cofactor.

It catalyses the reaction N(6)-acetyl-L-lysyl-[protein] + NAD(+) + H2O = 2''-O-acetyl-ADP-D-ribose + nicotinamide + L-lysyl-[protein]. Its function is as follows. NAD-dependent deacetylase, which plays an important role in the regulation of transcriptional repression. The polypeptide is NAD-dependent deacetylase sir2B (sir2B) (Dictyostelium discoideum (Social amoeba)).